Reading from the N-terminus, the 214-residue chain is Probable nicotinate-nucleotide adenylyltransferase (214 aa).

The protein belongs to the NadD family.

It carries out the reaction nicotinate beta-D-ribonucleotide + ATP + H(+) = deamido-NAD(+) + diphosphate. The protein operates within cofactor biosynthesis; NAD(+) biosynthesis; deamido-NAD(+) from nicotinate D-ribonucleotide: step 1/1. Its function is as follows. Catalyzes the reversible adenylation of nicotinate mononucleotide (NaMN) to nicotinic acid adenine dinucleotide (NaAD). This chain is Probable nicotinate-nucleotide adenylyltransferase, found in Mycobacterium tuberculosis (strain ATCC 25177 / H37Ra).